Here is a 542-residue protein sequence, read N- to C-terminus: MARYVFITGGVVSSLGKGIAAAALGALLQSRGYRVRLRKLDPYLNVDPGTMSPTQHGEVFVTDDGAETDLDLGHYERFTGRSATKTDNITTGRIYKNIIDKERRGDYLGATVQVIPHVTNEIKDFVTEGNDDYDFVICEIGGTVGDIEAMPFMEAIRQLGNDLPRGTAIYVHLTLMPYIPAAGELKTKPTQHSVKELQALGIHPDILLVRADREIPEAERRKLSLFCNVRPSAVIQALDVANIYDVPIAYHNEGLDSEVLAAFGIEPAPKPRLEQWEEVCNRIRTPEGEVTIAIVGKYTGLKDAYKSLIEALHHGGFANRVKVKLEWIESEVFEKEDPTPYLEKVNGILVPGGFGERGSEGKIMAAQFARERNVPYFGICFGMQMAVVEAARHLAGIENASSTEFGPTAEPVVGLMTEWVKGNELEKRSTKGDLGGTMRLGAYKAALKKDTKIAEIYGTTDISERHRHRYEVNVDYKDRLEECGLVFSGMSPDGVLPETVEYPDHPWFIGVQYHPELKSRPLDPHPLFASFVEAAVEQSRLV.

The segment at 1 to 265 is amidoligase domain; the sequence is MARYVFITGG…DSEVLAAFGI (265 aa). CTP is bound at residue serine 13. Serine 13 lines the UTP pocket. Residues 14-19 and aspartate 71 each bind ATP; that span reads SLGKGI. Mg(2+) is bound by residues aspartate 71 and glutamate 139. Residues 146-148, 186-191, and lysine 222 contribute to the CTP site; these read DIE and KTKPTQ. Residues 186–191 and lysine 222 each bind UTP; that span reads KTKPTQ. Residues 291–541 form the Glutamine amidotransferase type-1 domain; sequence TIAIVGKYTG…VEAAVEQSRL (251 aa). Residue glycine 353 coordinates L-glutamine. Cysteine 380 functions as the Nucleophile; for glutamine hydrolysis in the catalytic mechanism. L-glutamine-binding positions include 381–384, glutamate 404, and arginine 469; that span reads FGMQ. Catalysis depends on residues histidine 514 and glutamate 516.

Belongs to the CTP synthase family. In terms of assembly, homotetramer.

The catalysed reaction is UTP + L-glutamine + ATP + H2O = CTP + L-glutamate + ADP + phosphate + 2 H(+). It carries out the reaction L-glutamine + H2O = L-glutamate + NH4(+). It catalyses the reaction UTP + NH4(+) + ATP = CTP + ADP + phosphate + 2 H(+). It functions in the pathway pyrimidine metabolism; CTP biosynthesis via de novo pathway; CTP from UDP: step 2/2. Allosterically activated by GTP, when glutamine is the substrate; GTP has no effect on the reaction when ammonia is the substrate. The allosteric effector GTP functions by stabilizing the protein conformation that binds the tetrahedral intermediate(s) formed during glutamine hydrolysis. Inhibited by the product CTP, via allosteric rather than competitive inhibition. Its function is as follows. Catalyzes the ATP-dependent amination of UTP to CTP with either L-glutamine or ammonia as the source of nitrogen. Regulates intracellular CTP levels through interactions with the four ribonucleotide triphosphates. The chain is CTP synthase from Agrobacterium fabrum (strain C58 / ATCC 33970) (Agrobacterium tumefaciens (strain C58)).